The chain runs to 333 residues: L-lactate dehydrogenase B chain (333 aa).

Residues 29-57 (GQVG…IEDK) and R99 contribute to the NAD(+) site. Substrate is bound by residues R106, N138, and R169. An NAD(+)-binding site is contributed by N138. Residue H193 is the Proton acceptor of the active site. T248 is a binding site for substrate.

It belongs to the LDH/MDH superfamily. LDH family. Homotetramer.

The protein localises to the cytoplasm. The enzyme catalyses (S)-lactate + NAD(+) = pyruvate + NADH + H(+). It functions in the pathway fermentation; pyruvate fermentation to lactate; (S)-lactate from pyruvate: step 1/1. Its function is as follows. Interconverts simultaneously and stereospecifically pyruvate and lactate with concomitant interconversion of NADH and NAD(+). The chain is L-lactate dehydrogenase B chain (ldhb) from Anguilla rostrata (American eel).